Consider the following 154-residue polypeptide: 6,7-dimethyl-8-ribityllumazine synthase (154 aa).

5-amino-6-(D-ribitylamino)uracil contacts are provided by residues F23, 57-59 (AFE), and 81-83 (AII). A (2S)-2-hydroxy-3-oxobutyl phosphate-binding site is contributed by 86–87 (ST). H89 functions as the Proton donor in the catalytic mechanism. F114 contributes to the 5-amino-6-(D-ribitylamino)uracil binding site. Position 128 (R128) interacts with (2S)-2-hydroxy-3-oxobutyl phosphate.

Belongs to the DMRL synthase family.

The catalysed reaction is (2S)-2-hydroxy-3-oxobutyl phosphate + 5-amino-6-(D-ribitylamino)uracil = 6,7-dimethyl-8-(1-D-ribityl)lumazine + phosphate + 2 H2O + H(+). It participates in cofactor biosynthesis; riboflavin biosynthesis; riboflavin from 2-hydroxy-3-oxobutyl phosphate and 5-amino-6-(D-ribitylamino)uracil: step 1/2. Functionally, catalyzes the formation of 6,7-dimethyl-8-ribityllumazine by condensation of 5-amino-6-(D-ribitylamino)uracil with 3,4-dihydroxy-2-butanone 4-phosphate. This is the penultimate step in the biosynthesis of riboflavin. The chain is 6,7-dimethyl-8-ribityllumazine synthase from Nitratiruptor sp. (strain SB155-2).